The chain runs to 263 residues: HTH-type transcriptional repressor NanR (263 aa).

Positions 30–98 (KKLSEMVEEE…NGERARVSRP (69 aa)) constitute an HTH gntR-type domain. The H-T-H motif DNA-binding region spans 58–77 (ERELMAFFNVGRPSVREALA).

The protein belongs to the NanR family.

Functionally, transcriptional repressor that controls expression of the genes required for the catabolism of sialic acids. In Salmonella bongori (strain ATCC 43975 / DSM 13772 / NCTC 12419), this protein is HTH-type transcriptional repressor NanR.